The chain runs to 425 residues: Serine hydroxymethyltransferase (425 aa).

(6S)-5,6,7,8-tetrahydrofolate contacts are provided by residues L128 and 132–134; that span reads GHL. K237 is subject to N6-(pyridoxal phosphate)lysine.

The protein belongs to the SHMT family. In terms of assembly, homodimer. It depends on pyridoxal 5'-phosphate as a cofactor.

The protein resides in the cytoplasm. The enzyme catalyses (6R)-5,10-methylene-5,6,7,8-tetrahydrofolate + glycine + H2O = (6S)-5,6,7,8-tetrahydrofolate + L-serine. The protein operates within one-carbon metabolism; tetrahydrofolate interconversion. It functions in the pathway amino-acid biosynthesis; glycine biosynthesis; glycine from L-serine: step 1/1. In terms of biological role, catalyzes the reversible interconversion of serine and glycine with tetrahydrofolate (THF) serving as the one-carbon carrier. This reaction serves as the major source of one-carbon groups required for the biosynthesis of purines, thymidylate, methionine, and other important biomolecules. Also exhibits THF-independent aldolase activity toward beta-hydroxyamino acids, producing glycine and aldehydes, via a retro-aldol mechanism. The sequence is that of Serine hydroxymethyltransferase from Wolbachia sp. subsp. Drosophila simulans (strain wRi).